Here is a 378-residue protein sequence, read N- to C-terminus: REST corepressor 3 (378 aa).

In terms of domain architecture, ELM2 spans 1–83 (MRVGAEYQAR…KSLADLPNFT (83 aa)). Residues 84 to 135 (PFPDEWTVEDKVLFEQAFSFHGKSFHRIQQMLPDKTIASLVKYYYSWKKTRS) form the SANT domain. Residues 147-219 (LANRNNQGDS…SQRSKCRPPK (73 aa)) form a disordered region. A compositionally biased stretch (basic and acidic residues) spans 162 to 184 (EPHPMDGNDSDYDPKKEAKKEGN). Positions 205–217 (QHRHHSQRSKCRP) are enriched in basic residues. Residues 238-273 (ANTILRRLDMELISLKRQVQNAKQVNSALKQKMEGG) adopt a coiled-coil conformation. Residues 337–356 (TASSTSCCSCSPPSASAAPT) form a disordered region.

This sequence belongs to the CoREST family.

Its subcellular location is the nucleus. May act as a component of a corepressor complex that represses transcription. The sequence is that of REST corepressor 3 (RCOR3) from Gallus gallus (Chicken).